The primary structure comprises 592 residues: Glutamine--fructose-6-phosphate aminotransferase [isomerizing] (592 aa).

Cysteine 2 functions as the Nucleophile; for GATase activity in the catalytic mechanism. The Glutamine amidotransferase type-2 domain occupies 2-217 (CGIVGYVGRD…DGEIADLTPD (216 aa)). 2 consecutive SIS domains span residues 277–416 (IPFK…EREN) and 441–582 (VAEK…VDQP). Lysine 587 (for Fru-6P isomerization activity) is an active-site residue.

Homodimer.

Its subcellular location is the cytoplasm. The catalysed reaction is D-fructose 6-phosphate + L-glutamine = D-glucosamine 6-phosphate + L-glutamate. Catalyzes the first step in hexosamine metabolism, converting fructose-6P into glucosamine-6P using glutamine as a nitrogen source. This is Glutamine--fructose-6-phosphate aminotransferase [isomerizing] from Aquifex aeolicus (strain VF5).